A 363-amino-acid polypeptide reads, in one-letter code: Peroxisomal (S)-2-hydroxyacid oxidase GLO4 (363 aa).

In terms of domain architecture, FMN hydroxy acid dehydrogenase spans 1-357 (MDQIVNVDEF…TRNHVRTENE (357 aa)). Residues 78-80 (PTA), serine 107, 128-130 (QIY), and threonine 156 contribute to the FMN site. Tyrosine 130 contacts a 2-oxocarboxylate. Arginine 165 is a binding site for a 2-oxocarboxylate. 2 residues coordinate FMN: lysine 228 and serine 250. The Proton acceptor role is filled by histidine 252. Arginine 255 is an a 2-oxocarboxylate binding site. Residues 283–287 (DGGVR) and 306–307 (GR) each bind FMN. Residues 361 to 363 (SML) carry the Microbody targeting signal motif.

This sequence belongs to the FMN-dependent alpha-hydroxy acid dehydrogenase family. Homotetramer. FMN is required as a cofactor.

Its subcellular location is the peroxisome. It carries out the reaction a (2S)-2-hydroxycarboxylate + O2 = a 2-oxocarboxylate + H2O2. It catalyses the reaction 2-hydroxydodecanoate + O2 = 2-oxododecanoate + H2O2. The enzyme catalyses 2-hydroxyhexanoate + O2 = 2-oxohexanoate + H2O2. The catalysed reaction is 2-hydroxyoctanoate + O2 = 2-oxooctanoate + H2O2. It carries out the reaction (S)-lactate + O2 = pyruvate + H2O2. The protein operates within lipid metabolism; fatty acid metabolism. In terms of biological role, oxidase that catalyzes the oxidation of a broad range of 2-hydroxyacids to the corresponding 2-oxoacids, with a reduction of O2 to H2O2. Displays the highest activity with the long-chain fatty acid 2-hydroxydodecanoate and has intermediate activity with 2-hydroxyhexanoate, 2-hydroxyoctanote, and the short-chain hydroxyacid (S)-lactate (L-lactate). With much lower activity, it can also use glycolate, leucic acid, valic acid, and isoleucic acid as substrates in vitro. Cannot use 2-hydroxyhexadecanoate or D-lactate as substrates. May be involved in a general medium- and long-chain fatty acid catabolic pathway such as alpha-oxidation. The polypeptide is Peroxisomal (S)-2-hydroxyacid oxidase GLO4 (GLO4) (Arabidopsis thaliana (Mouse-ear cress)).